The following is a 578-amino-acid chain: Phosphatase DCR2 (578 aa).

An ATP-binding site is contributed by 116 to 123; it reads GRRWFGKS.

It is found in the cytoplasm. Its function is as follows. Required for cell cycle progression. Has a role in the completion of START. This chain is Phosphatase DCR2 (DCR2), found in Saccharomyces cerevisiae (strain ATCC 204508 / S288c) (Baker's yeast).